We begin with the raw amino-acid sequence, 218 residues long: Glutathione S-transferase Mu 6 (218 aa).

The GST N-terminal domain maps to 1 to 88 (MPVTLGYWDI…YLGRKHNLCG (88 aa)). Residues 7–8 (YW), 46–50 (WLNDK), 59–60 (NL), and 72–73 (QS) each bind glutathione. The GST C-terminal domain occupies 90–208 (TEEERIRVDI…KTSRFLPSPV (119 aa)). A substrate-binding site is contributed by Tyr116.

It belongs to the GST superfamily. Mu family. Homodimer. As to expression, expressed in liver, stomach and small intestine. Not expressed in spleen, kidney, colon, heart, muscle, brain or lung.

The protein resides in the cytoplasm. The catalysed reaction is RX + glutathione = an S-substituted glutathione + a halide anion + H(+). Functionally, conjugation of reduced glutathione to a wide number of exogenous and endogenous hydrophobic electrophiles. The polypeptide is Glutathione S-transferase Mu 6 (Gstm6) (Mus musculus (Mouse)).